Consider the following 203-residue polypeptide: Glycerol-3-phosphate acyltransferase (203 aa).

The next 4 membrane-spanning stretches (helical) occupy residues 6 to 26, 82 to 102, 118 to 138, and 141 to 161; these read LTLL…AVLV, AISL…PIFF, APIG…LLLI, and YSSL…WWLD.

It belongs to the PlsY family. In terms of assembly, probably interacts with PlsX.

The protein localises to the cell inner membrane. The catalysed reaction is an acyl phosphate + sn-glycerol 3-phosphate = a 1-acyl-sn-glycero-3-phosphate + phosphate. Its pathway is lipid metabolism; phospholipid metabolism. In terms of biological role, catalyzes the transfer of an acyl group from acyl-phosphate (acyl-PO(4)) to glycerol-3-phosphate (G3P) to form lysophosphatidic acid (LPA). This enzyme utilizes acyl-phosphate as fatty acyl donor, but not acyl-CoA or acyl-ACP. The polypeptide is Glycerol-3-phosphate acyltransferase (Shewanella putrefaciens (strain CN-32 / ATCC BAA-453)).